Here is a 209-residue protein sequence, read N- to C-terminus: Kinetochore protein Spc25 (209 aa).

Residues 74 to 107 (TRAVREKLAEERQKNAEMQAQLEKANDERIEQMD) are a coiled coil.

Belongs to the SPC25 family. In terms of assembly, component of the Ndc80 complex, which is composed of Ndc80, Nuf2 and Spc25.

It is found in the nucleus. It localises to the chromosome. The protein localises to the centromere. The protein resides in the kinetochore. Acts as a component of the essential kinetochore-associated Ndc80 complex, which is required for chromosome segregation and spindle checkpoint activity during meiosis and mitosis. Required for kinetochore integrity and the organization of stable microtubule binding sites in the outer plate of the kinetochore. Participates in SAC signaling that responds specifically to disruptions in spindle microtubule dynamics. The NDC80 complex synergistically enhances the affinity of the SKA1 complex for microtubules and may allow the NDC80 complex to track depolymerizing microtubules. The sequence is that of Kinetochore protein Spc25 from Drosophila grimshawi (Hawaiian fruit fly).